Here is a 233-residue protein sequence, read N- to C-terminus: Purine nucleoside phosphorylase DeoD-type (233 aa).

An a purine D-ribonucleoside-binding site is contributed by His4. Phosphate contacts are provided by residues Gly20, Arg24, Arg43, and 87–90 (RIGT). Residues 179 to 181 (EME) and 203 to 204 (SD) contribute to the a purine D-ribonucleoside site. The Proton donor role is filled by Asp204.

It belongs to the PNP/UDP phosphorylase family. As to quaternary structure, homohexamer; trimer of homodimers.

The catalysed reaction is a purine D-ribonucleoside + phosphate = a purine nucleobase + alpha-D-ribose 1-phosphate. It carries out the reaction a purine 2'-deoxy-D-ribonucleoside + phosphate = a purine nucleobase + 2-deoxy-alpha-D-ribose 1-phosphate. Catalyzes the reversible phosphorolytic breakdown of the N-glycosidic bond in the beta-(deoxy)ribonucleoside molecules, with the formation of the corresponding free purine bases and pentose-1-phosphate. This is Purine nucleoside phosphorylase DeoD-type from Helicobacter pylori (strain J99 / ATCC 700824) (Campylobacter pylori J99).